Consider the following 398-residue polypeptide: MGWKTLDDMDLTGKRVLVRVDINVPIVDGVVTDSTRIRRLMPTIRDILAAGGRPILLAHFGRPGGERRKNLSLGQLVPTLERAFETKVLFADDCVGPAAEEAAEALQPGQVLLLENTRFHASETKNDPDLAAGMARLGDIYCNDAFSAAHRAHSSTEAIARLLPSCAGRLMQAELEALEKALGKPERPVTAVVGGAKVSTKLELLGNLIEKVDYLVIGGGMANTFLVAKGLPVGKSLAERIMKDTAAEILAKAEAAGCTIVLPSDVVVAEKFESHAPHQILPNDRCPDEGMILDAGPDSLAAIKAIFEKSRTLIWNGPLGAFELEPFDAATNAAALKAAALTRAGKLISVAGGGDTVAALNASGAAGDFTYISTAGGAFLEWMEGKTLPGVAALIQAG.

Substrate contacts are provided by residues 21–23 (DIN), Arg36, 59–62 (HFGR), Arg118, and Arg151. Residues Lys201, Glu323, and 353-356 (GGDT) each bind ATP.

The protein belongs to the phosphoglycerate kinase family. As to quaternary structure, monomer.

The protein resides in the cytoplasm. It catalyses the reaction (2R)-3-phosphoglycerate + ATP = (2R)-3-phospho-glyceroyl phosphate + ADP. It functions in the pathway carbohydrate degradation; glycolysis; pyruvate from D-glyceraldehyde 3-phosphate: step 2/5. This is Phosphoglycerate kinase from Ruegeria pomeroyi (strain ATCC 700808 / DSM 15171 / DSS-3) (Silicibacter pomeroyi).